Reading from the N-terminus, the 508-residue chain is Maturase K (508 aa).

Belongs to the intron maturase 2 family. MatK subfamily.

The protein localises to the plastid. It is found in the chloroplast. In terms of biological role, usually encoded in the trnK tRNA gene intron. Probably assists in splicing its own and other chloroplast group II introns. The protein is Maturase K of Abrus precatorius (Indian licorice).